Reading from the N-terminus, the 385-residue chain is Carbamoyl phosphate synthase small chain (385 aa).

Residues 1-185 (MSEPAILVLA…LGKGFIEQTQ (185 aa)) are CPSase. Residues serine 47, glycine 237, and glycine 239 each coordinate L-glutamine. The Glutamine amidotransferase type-1 domain occupies 189-376 (NVVAYDFGVK…INEMRKANLS (188 aa)). Cysteine 265 serves as the catalytic Nucleophile. 5 residues coordinate L-glutamine: leucine 266, glutamine 269, asparagine 307, glycine 309, and phenylalanine 310. Catalysis depends on residues histidine 349 and glutamate 351.

This sequence belongs to the CarA family. As to quaternary structure, composed of two chains; the small (or glutamine) chain promotes the hydrolysis of glutamine to ammonia, which is used by the large (or ammonia) chain to synthesize carbamoyl phosphate. Tetramer of heterodimers (alpha,beta)4.

The enzyme catalyses hydrogencarbonate + L-glutamine + 2 ATP + H2O = carbamoyl phosphate + L-glutamate + 2 ADP + phosphate + 2 H(+). The catalysed reaction is L-glutamine + H2O = L-glutamate + NH4(+). It functions in the pathway amino-acid biosynthesis; L-arginine biosynthesis; carbamoyl phosphate from bicarbonate: step 1/1. It participates in pyrimidine metabolism; UMP biosynthesis via de novo pathway; (S)-dihydroorotate from bicarbonate: step 1/3. In terms of biological role, small subunit of the glutamine-dependent carbamoyl phosphate synthetase (CPSase). CPSase catalyzes the formation of carbamoyl phosphate from the ammonia moiety of glutamine, carbonate, and phosphate donated by ATP, constituting the first step of 2 biosynthetic pathways, one leading to arginine and/or urea and the other to pyrimidine nucleotides. The small subunit (glutamine amidotransferase) binds and cleaves glutamine to supply the large subunit with the substrate ammonia. This is Carbamoyl phosphate synthase small chain from Pasteurella multocida (strain Pm70).